The chain runs to 1145 residues: DNA mismatch repair protein msh-3 (1145 aa).

Disordered regions lie at residues 1-183 (MAGP…GAKT) and 857-879 (SSSA…LAQL). The span at 13 to 33 (ASISSFFTPRNTSPLVNLSQN) shows a compositional bias: polar residues. Residues 121–131 (AERKKKEELHR) are compositionally biased toward basic and acidic residues. Acidic residues predominate over residues 158-169 (GEGEEGEDDEEE). The tract at residues 183-307 (TGKLTPMELQ…RKLTNVYTKG (125 aa)) is mispair-binding domain. Residue 882 to 889 (GPNMGGKS) participates in ATP binding. The tract at residues 1030 to 1056 (KSRTSMDDDAMEVDGDGDGQEGAGADK) is disordered. The segment covering 1036 to 1048 (DDDAMEVDGDGDG) has biased composition (acidic residues).

This sequence belongs to the DNA mismatch repair MutS family. MSH3 subfamily. In terms of assembly, heterodimer consisting of msh-2-msh-3 (MutS beta). Forms a ternary complex with MutL alpha (mlh-1-pms-1).

The protein resides in the nucleus. In terms of biological role, component of the post-replicative DNA mismatch repair system (MMR). Heterodimerizes with msh-2 to form MutS beta, which binds to DNA mismatches thereby initiating DNA repair. Msh-3 provides substrate-binding and substrate specificity to the complex. When bound, the MutS beta heterodimer bends the DNA helix and shields approximately 20 base pairs. Acts mainly to repair insertion-deletion loops (IDLs) from 2 to 13 nucleotides in size, but can also repair base-base and single insertion-deletion mismatches that occur during replication. After mismatch binding, forms a ternary complex with the MutL alpha heterodimer, which is thought to be responsible for directing the downstream MMR events, including strand discrimination, excision, and resynthesis. ATP binding and hydrolysis play a pivotal role in mismatch repair functions. The protein is DNA mismatch repair protein msh-3 (msh-3) of Neurospora crassa (strain ATCC 24698 / 74-OR23-1A / CBS 708.71 / DSM 1257 / FGSC 987).